The primary structure comprises 508 residues: Photosystem II CP47 reaction center protein (508 aa).

6 helical membrane passes run 21 to 36 (SVHIMHTALVSGWAGS), 101 to 115 (IVFSGLCFLAAIWHW), 140 to 156 (GIHLFLSGVACFGSGAF), 203 to 218 (IAAGILGILAGLFHLS), 237 to 252 (VLSSSIAAVFFAAFIV), and 457 to 472 (TFALLFFFGHIWHGAR).

The protein belongs to the PsbB/PsbC family. PsbB subfamily. PSII is composed of 1 copy each of membrane proteins PsbA, PsbB, PsbC, PsbD, PsbE, PsbF, PsbH, PsbI, PsbJ, PsbK, PsbL, PsbM, PsbT, PsbX, PsbY, PsbZ, Psb30/Ycf12, at least 3 peripheral proteins of the oxygen-evolving complex and a large number of cofactors. It forms dimeric complexes. Requires Binds multiple chlorophylls. PSII binds additional chlorophylls, carotenoids and specific lipids. as cofactor.

Its subcellular location is the plastid. The protein resides in the chloroplast thylakoid membrane. One of the components of the core complex of photosystem II (PSII). It binds chlorophyll and helps catalyze the primary light-induced photochemical processes of PSII. PSII is a light-driven water:plastoquinone oxidoreductase, using light energy to abstract electrons from H(2)O, generating O(2) and a proton gradient subsequently used for ATP formation. The sequence is that of Photosystem II CP47 reaction center protein from Cycas taitungensis (Prince sago).